Consider the following 433-residue polypeptide: 3-phosphoshikimate 1-carboxyvinyltransferase (433 aa).

Residues K15, S16, and R20 each coordinate 3-phosphoshikimate. Residue K15 coordinates phosphoenolpyruvate. Residues G96 and R124 each contribute to the phosphoenolpyruvate site. 3-phosphoshikimate-binding residues include S169, Q171, S195, D318, and K345. Q171 is a phosphoenolpyruvate binding site. D318 acts as the Proton acceptor in catalysis. R349 and R393 together coordinate phosphoenolpyruvate.

Belongs to the EPSP synthase family. In terms of assembly, monomer.

The protein localises to the cytoplasm. The catalysed reaction is 3-phosphoshikimate + phosphoenolpyruvate = 5-O-(1-carboxyvinyl)-3-phosphoshikimate + phosphate. Its pathway is metabolic intermediate biosynthesis; chorismate biosynthesis; chorismate from D-erythrose 4-phosphate and phosphoenolpyruvate: step 6/7. Catalyzes the transfer of the enolpyruvyl moiety of phosphoenolpyruvate (PEP) to the 5-hydroxyl of shikimate-3-phosphate (S3P) to produce enolpyruvyl shikimate-3-phosphate and inorganic phosphate. The chain is 3-phosphoshikimate 1-carboxyvinyltransferase from Chlorobium luteolum (strain DSM 273 / BCRC 81028 / 2530) (Pelodictyon luteolum).